Consider the following 210-residue polypeptide: MGGKWSKRSMGGWSAIRERMRRAEPRAEPAADGVGAVSRDLEKHGAITSSNTAATNADCAWLEAQEEEEVGFPVRPQVPLRPMTYKAALDISHFLKEKGGLEGLIWSQRRQEILDLWIYHTQGYFPDWQNYTPGPGIRYPLTFGWCFKLVPVEPEKVEEANEGENNSLLHPMSLHGMEDAEKEVLVWRFDSKLAFHHMARELHPEYYKDC.

The tract at residues 1–37 (MGGKWSKRSMGGWSAIRERMRRAEPRAEPAADGVGAV) is disordered. G2 carries N-myristoyl glycine; by host lipidation. Position 6 is a phosphoserine; by host (S6). Residues 16–29 (IRERMRRAEPRAEP) are compositionally biased toward basic and acidic residues. An acidic; interacts with host PACS1 and PACS2; stabilizes the interaction of NEF/MHC-I with host AP1M1; necessary for MHC-I internalization region spans residues 66–69 (EEEE). Residues 73–82 (PVRPQVPLRP) form an SH3-binding; interaction with Src family tyrosine kinases region. Positions 76 to 79 (PQVP) match the PxxP; stabilizes the interaction of NEF/MHC-I with host AP1M1; necessary for MHC-I internalization motif. Residues 112-128 (EILDLWIYHTQGYFPDW) are mediates dimerization, Nef-PTE1 interaction. The interval 152-184 (VEPEKVEEANEGENNSLLHPMSLHGMEDAEKEV) is binding to ATP6V1H. Positions 168-169 (LL) match the Dileucine internalization motif; necessary for CD4 internalization motif. Residues 178–179 (ED) carry the Diacidic; necessary for CD4 internalization motif.

This sequence belongs to the lentivirus primate group Nef protein family. Monomer; cytosolic form. Homodimer; membrane bound form. Interacts with Nef associated p21-activated kinase (PAK2); this interaction activates PAK2. Associates with the Nef-MHC-I-AP1 complex; this complex is required for MHC-I internalization. Interacts (via C-terminus) with host PI3-kinase. Interacts with host PACS1; this interaction seems to be weak. Interacts with host PACS2. Interacts with host LCK and MAPK3; these interactions inhibit the kinase activity of the latter. Interacts with host ATP6V1H; this interaction may play a role in CD4 endocytosis. Associates with the CD4-Nef-AP2 complex; this complex is required for CD4 internalization. Interacts with host AP2 subunit alpha and AP2 subunit sigma2. Interacts with TCR-zeta chain; this interaction up-regulates the Fas ligand (FasL) surface expression. Interacts with host HCK, LYN, and SRC; these interactions activate the Src family kinases. Interacts with MAP3K5; this interaction inhibits the Fas and TNFR-mediated death signals. Interacts with beta-COP and PTE1. Interacts with human RACK1; this increases Nef phosphorylation by PKC. Interacts with TP53; this interaction decreases the half-life of TP53, protecting the infected cell against p53-mediated apoptosis. In terms of processing, the virion-associated Nef proteins are cleaved by the viral protease to release the soluble C-terminal core protein. Nef is probably cleaved concomitantly with viral structural proteins on maturation of virus particles. Post-translationally, myristoylated. Phosphorylated on serine residues, probably by host PKCdelta and theta.

The protein resides in the host cell membrane. It is found in the virion. It localises to the secreted. Its subcellular location is the host Golgi apparatus membrane. In terms of biological role, factor of infectivity and pathogenicity, required for optimal virus replication. Alters numerous pathways of T-lymphocyte function and down-regulates immunity surface molecules in order to evade host defense and increase viral infectivity. Alters the functionality of other immunity cells, like dendritic cells, monocytes/macrophages and NK cells. Its function is as follows. In infected CD4(+) T-lymphocytes, down-regulates the surface MHC-I, mature MHC-II, CD4, CD28, CCR5 and CXCR4 molecules. Mediates internalization and degradation of host CD4 through the interaction of with the cytoplasmic tail of CD4, the recruitment of AP-2 (clathrin adapter protein complex 2), internalization through clathrin coated pits, and subsequent transport to endosomes and lysosomes for degradation. Diverts host MHC-I molecules to the trans-Golgi network-associated endosomal compartments by an endocytic pathway to finally target them for degradation. MHC-I down-regulation may involve AP-1 (clathrin adapter protein complex 1) or possibly Src family kinase-ZAP70/Syk-PI3K cascade recruited by PACS2. In consequence infected cells are masked for immune recognition by cytotoxic T-lymphocytes. Decreasing the number of immune receptors also prevents reinfection by more HIV particles (superinfection). Down-regulates host SERINC3 and SERINC5 thereby excluding these proteins from the viral particles. Virion infectivity is drastically higher when SERINC3 or SERINC5 are excluded from the viral envelope, because these host antiviral proteins impair the membrane fusion event necessary for subsequent virion penetration. Bypasses host T-cell signaling by inducing a transcriptional program nearly identical to that of anti-CD3 cell activation. Interaction with TCR-zeta chain up-regulates the Fas ligand (FasL). Increasing surface FasL molecules and decreasing surface MHC-I molecules on infected CD4(+) cells send attacking cytotoxic CD8+ T-lymphocytes into apoptosis. Functionally, plays a role in optimizing the host cell environment for viral replication without causing cell death by apoptosis. Protects the infected cells from apoptosis in order to keep them alive until the next virus generation is ready to strike. Inhibits the Fas and TNFR-mediated death signals by blocking MAP3K5/ASK1. Decreases the half-life of TP53, protecting the infected cell against p53-mediated apoptosis. Inhibits the apoptotic signals regulated by the Bcl-2 family proteins through the formation of a Nef/PI3-kinase/PAK2 complex that leads to activation of PAK2 and induces phosphorylation of host BAD. In terms of biological role, extracellular Nef protein targets CD4(+) T-lymphocytes for apoptosis by interacting with CXCR4 surface receptors. This is Protein Nef from Human immunodeficiency virus type 1 group M subtype B (isolate ARV2/SF2) (HIV-1).